A 489-amino-acid polypeptide reads, in one-letter code: Serine/arginine-rich splicing factor 4 (489 aa).

One can recognise an RRM 1 domain in the interval 2 to 72 (PRVYIGRLSY…ERVIVEHARG (71 aa)). Disordered stretches follow at residues 72 to 95 (GPRR…GRDK) and 169 to 489 (KIRL…HSRS). S78 and S84 each carry phosphoserine. The region spanning 104–177 (YRLIVENLSS…RKIRLVEDKP (74 aa)) is the RRM 2 domain. 2 stretches are compositionally biased toward basic residues: residues 179–206 (SRRR…KSRS) and 214–246 (SHSK…KKEK). Over residues 247 to 279 (SRSPSKDNKSRSRSRSPDKSRSKSKDHAEDKLQ) the composition is skewed to basic and acidic residues. Phosphoserine occurs at positions 289, 291, and 293. Basic and acidic residues predominate over residues 293-332 (SRHDSKSRSRSQERRAEEERRRSVSRARSQEKSRSQEKSL). The segment covering 333–356 (LKSRSRSRSRSRSRSKDKRKGRKR) has biased composition (basic residues). 2 stretches are compositionally biased toward basic and acidic residues: residues 357 to 370 (SRDE…SKSE) and 394 to 426 (KDTD…RAEG). Phosphoserine occurs at positions 441, 453, and 455. Basic residues-rich tracts occupy residues 456–469 (RSKS…RSKS) and 479–489 (SRSRSRSHSRS).

Belongs to the splicing factor SR family. Found in a pre-mRNA splicing complex with SRSF4/SFRS4, SRSF5/SFRS5, SNRNP70, SNRPA1, SRRM1 and SRRM2. Interacts with PNN. In terms of processing, extensively phosphorylated on serine residues in the RS domain.

It localises to the nucleus speckle. Plays a role in alternative splice site selection during pre-mRNA splicing. Represses the splicing of MAPT/Tau exon 10. The chain is Serine/arginine-rich splicing factor 4 (Srsf4) from Mus musculus (Mouse).